Consider the following 145-residue polypeptide: Flagellar assembly factor FliW (145 aa).

It belongs to the FliW family. Interacts with translational regulator CsrA and flagellin(s).

The protein localises to the cytoplasm. Its function is as follows. Acts as an anti-CsrA protein, binds CsrA and prevents it from repressing translation of its target genes, one of which is flagellin. Binds to flagellin and participates in the assembly of the flagellum. In Anoxybacillus flavithermus (strain DSM 21510 / WK1), this protein is Flagellar assembly factor FliW.